The chain runs to 678 residues: UvrABC system protein B (678 aa).

A Helicase ATP-binding domain is found at 26 to 185 (EGLEDGEAFQ…LTTMQYTRND (160 aa)). Residue 39–46 (GVTGSGKT) coordinates ATP. Positions 92 to 115 (YYDYYQPEAYVPASDTYIAKDSSV) match the Beta-hairpin motif. The Helicase C-terminal domain maps to 430–596 (QVDDLLGEIR…KLNKKITDIL (167 aa)). Residues 597–630 (EDSPYAPKPGASAAKLKAAEADGEYSPQEMQRMT) form a disordered region. The UVR domain occupies 635 to 670 (ASEIKRMEKQMYQAAKDLDFELAAKLRDDLKRLKSS).

It belongs to the UvrB family. As to quaternary structure, forms a heterotetramer with UvrA during the search for lesions. Interacts with UvrC in an incision complex.

The protein localises to the cytoplasm. Its function is as follows. The UvrABC repair system catalyzes the recognition and processing of DNA lesions. A damage recognition complex composed of 2 UvrA and 2 UvrB subunits scans DNA for abnormalities. Upon binding of the UvrA(2)B(2) complex to a putative damaged site, the DNA wraps around one UvrB monomer. DNA wrap is dependent on ATP binding by UvrB and probably causes local melting of the DNA helix, facilitating insertion of UvrB beta-hairpin between the DNA strands. Then UvrB probes one DNA strand for the presence of a lesion. If a lesion is found the UvrA subunits dissociate and the UvrB-DNA preincision complex is formed. This complex is subsequently bound by UvrC and the second UvrB is released. If no lesion is found, the DNA wraps around the other UvrB subunit that will check the other stand for damage. This is UvrABC system protein B from Hydrogenovibrio crunogenus (strain DSM 25203 / XCL-2) (Thiomicrospira crunogena).